Here is a 428-residue protein sequence, read N- to C-terminus: AP-1 complex subunit mu-1 (428 aa).

The MHD domain occupies 170 to 426; the sequence is KNEVFLDVIE…ITMAGEYELR (257 aa).

It belongs to the adaptor complexes medium subunit family. In terms of assembly, adaptor protein complex 1 (AP-1) is a heterotetramer composed of two large adaptins (gamma-type subunit and beta-type subunit), a medium adaptin (mu-type subunit) and a small adaptin (sigma-type subunit).

Its subcellular location is the golgi apparatus. The protein resides in the cytoplasmic vesicle. It is found in the clathrin-coated vesicle membrane. Subunit of clathrin-associated adaptor protein complex 1 that plays a role in protein sorting at the trans-Golgi network and early endosomes (TGN/EE). The AP complexes mediate the recruitment of clathrin to membranes and the recognition of sorting signals within the cytosolic tails of transmembrane cargo molecules. Functions redundantly with AP1M2 in multiple post-Golgi trafficking pathways leading from the TGN to the vacuole, the plasma membrane, and the cell-division plane. This is AP-1 complex subunit mu-1 (AP1M1) from Arabidopsis thaliana (Mouse-ear cress).